Consider the following 560-residue polypeptide: Protein GAT2 (560 aa).

Disordered regions lie at residues 274–297 (RQQEQQQLKQQESEKESSSPFSNK), 345–383 (FLSTSSSSPSPTAGSAPLQKLQVPRQDDPNDKKMNISSS), and 412–461 (LNTK…SDEK). A compositionally biased stretch (low complexity) spans 347 to 361 (STSSSSPSPTAGSAP). The segment covering 369–378 (RQDDPNDKKM) has biased composition (basic and acidic residues). Residues 414–425 (TKKKNNRGRPRA) are compositionally biased toward basic residues. Positions 428-456 (RQPTLTTSSHFINNSNPGAAAVSTTTPAA) are enriched in polar residues. The GATA-type zinc finger occupies 472-497 (CFHCGETETPEWRKGPYGTRTLCNAC).

The sequence is that of Protein GAT2 (GAT2) from Saccharomyces cerevisiae (strain ATCC 204508 / S288c) (Baker's yeast).